The primary structure comprises 288 residues: UPF0494 membrane protein C212.04c (288 aa).

4 helical membrane passes run 107-127 (WVLL…KFKI), 144-164 (IWGP…AFNY), 174-194 (PLIS…SVII), and 198-218 (IAGV…GVIA).

This sequence belongs to the UPF0494 family.

It is found in the cytoplasm. The protein resides in the endoplasmic reticulum. It localises to the membrane. The protein is UPF0494 membrane protein C212.04c of Schizosaccharomyces pombe (strain 972 / ATCC 24843) (Fission yeast).